Reading from the N-terminus, the 253-residue chain is Ribonuclease HII (253 aa).

The RNase H type-2 domain occupies 30–221 (GPVAGVDEVG…VRRLVVDGEP (192 aa)). Asp-36, Glu-37, and Asp-130 together coordinate a divalent metal cation.

This sequence belongs to the RNase HII family. It depends on Mn(2+) as a cofactor. Mg(2+) serves as cofactor.

The protein resides in the cytoplasm. It carries out the reaction Endonucleolytic cleavage to 5'-phosphomonoester.. In terms of biological role, endonuclease that specifically degrades the RNA of RNA-DNA hybrids. The protein is Ribonuclease HII of Mycolicibacterium gilvum (strain PYR-GCK) (Mycobacterium gilvum (strain PYR-GCK)).